The following is a 366-amino-acid chain: L-tyrosine C(3)-methyltransferase (366 aa).

Polar residues predominate over residues 1 to 12 (MTISLENTTVGQ). Residues 1-22 (MTISLENTTVGQNPAGGPPTGK) are disordered. Glutamate 223 contributes to the S-adenosyl-L-methionine binding site.

This sequence belongs to the class I-like SAM-binding methyltransferase superfamily. Cation-independent O-methyltransferase family.

The catalysed reaction is L-tyrosine + S-adenosyl-L-methionine = 3-methyl-L-tyrosine + S-adenosyl-L-homocysteine + H(+). It participates in antibiotic biosynthesis. Its function is as follows. C-methyltransferase that mediates the methylation of tyrosine into 3-methyl-L-tyrosine (3-Me-Tyr) in biosynthesis of saframycin A, a potent antitumor antibiotic that belongs to the tetrahydroisoquinoline family. Involved in biosynthesis of 3-hydroxy-5-methyl-O-methyltyrosine (3-OH-5-Me-OMe-Tyr), a core structure of saframycin A. This is L-tyrosine C(3)-methyltransferase from Streptomyces lavendulae.